Here is a 429-residue protein sequence, read N- to C-terminus: Ribosomal RNA small subunit methyltransferase B (429 aa).

S-adenosyl-L-methionine contacts are provided by residues 254–260 (CAAPGGK), Asp277, Asp303, and Asp322. Cys375 acts as the Nucleophile in catalysis.

The protein belongs to the class I-like SAM-binding methyltransferase superfamily. RsmB/NOP family.

It localises to the cytoplasm. It carries out the reaction cytidine(967) in 16S rRNA + S-adenosyl-L-methionine = 5-methylcytidine(967) in 16S rRNA + S-adenosyl-L-homocysteine + H(+). Its function is as follows. Specifically methylates the cytosine at position 967 (m5C967) of 16S rRNA. This Escherichia coli (strain SMS-3-5 / SECEC) protein is Ribosomal RNA small subunit methyltransferase B.